Reading from the N-terminus, the 331-residue chain is MRLLVTGGAGFIGANFVHLALREARTSSITVLDALTYAGSRESLAPVADRIRLVQGDITDAALVGDLVAESDAVVHFAAETHVDNALADPEPFLHSNVVGTYTILEAVRRHNVRLHHVSTDEVYGDLELDNPARFNETTPYNPSSPYSSTKAAADLLVRAWVRSYGVRATISNCSNNYGPYQHVEKFIPRQITNVLTGRRPKLYGAGANVRDWIHVDDHNSAVWRILTDGTIGRTYLIGAECERNNLTVMRTILKLMGRDPDDFDHVTDRAGHDLRYAIDPSTLQDELGWAPKHTDFEAGLTDTIDWYRANESWWRPLKDTVEAKYQERGQ.

NAD(+)-binding positions include 11-12 (FI), 33-36 (DALT), 57-58 (DI), 77-81 (FAAET), and S96. Position 81 (T81) interacts with substrate. T120 serves as a coordination point for substrate. The active-site Proton donor is the D121. Residues E122 and Y147 each act as proton acceptor in the active site. Residue 147 to 151 (YSSTK) coordinates NAD(+). N176 is a binding site for substrate. N177 is an NAD(+) binding site. Substrate contacts are provided by residues 186–191 (KFIPRQ), 202–204 (KLY), R211, N246, and 269–273 (DRAGH).

The protein belongs to the NAD(P)-dependent epimerase/dehydratase family. dTDP-glucose dehydratase subfamily. As to quaternary structure, homodimer. It depends on NAD(+) as a cofactor.

It catalyses the reaction dTDP-alpha-D-glucose = dTDP-4-dehydro-6-deoxy-alpha-D-glucose + H2O. The protein operates within carbohydrate biosynthesis; dTDP-L-rhamnose biosynthesis. Its function is as follows. Catalyzes the dehydration of dTDP-D-glucose to form dTDP-6-deoxy-D-xylo-4-hexulose via a three-step process involving oxidation, dehydration and reduction. Involved in the biosynthesis of the dTDP-L-rhamnose which is a component of the critical linker, D-N-acetylglucosamine-L-rhamnose disaccharide, which connects the galactan region of arabinogalactan to peptidoglycan via a phosphodiester linkage. In Mycolicibacterium smegmatis (strain ATCC 700084 / mc(2)155) (Mycobacterium smegmatis), this protein is dTDP-glucose 4,6-dehydratase (rmlB).